A 1299-amino-acid chain; its full sequence is DNA-directed RNA polymerase subunit beta' (1299 aa).

4 residues coordinate Zn(2+): Cys60, Cys62, Cys75, and Cys78. The disordered stretch occupies residues 188–209 (GAKSDQKRRAKDGAEKEMGQTR). Mg(2+)-binding residues include Asp535, Asp537, and Asp539. Zn(2+)-binding residues include Cys882, Cys959, Cys966, and Cys969.

This sequence belongs to the RNA polymerase beta' chain family. In terms of assembly, the RNAP catalytic core consists of 2 alpha, 1 beta, 1 beta' and 1 omega subunit. When a sigma factor is associated with the core the holoenzyme is formed, which can initiate transcription. It depends on Mg(2+) as a cofactor. Zn(2+) is required as a cofactor.

The catalysed reaction is RNA(n) + a ribonucleoside 5'-triphosphate = RNA(n+1) + diphosphate. Its function is as follows. DNA-dependent RNA polymerase catalyzes the transcription of DNA into RNA using the four ribonucleoside triphosphates as substrates. The protein is DNA-directed RNA polymerase subunit beta' of Clavibacter sepedonicus (Clavibacter michiganensis subsp. sepedonicus).